The following is a 270-amino-acid chain: NADPH-dependent 7-cyano-7-deazaguanine reductase (270 aa).

Position 79-81 (79-81 (IES)) interacts with substrate. 81 to 82 (SK) lines the NADPH pocket. Cys177 functions as the Thioimide intermediate in the catalytic mechanism. Asp184 (proton donor) is an active-site residue. A substrate-binding site is contributed by 216 to 217 (HE). NADPH is bound at residue 245–246 (RG).

It belongs to the GTP cyclohydrolase I family. QueF type 2 subfamily. Homodimer.

Its subcellular location is the cytoplasm. It carries out the reaction 7-aminomethyl-7-carbaguanine + 2 NADP(+) = 7-cyano-7-deazaguanine + 2 NADPH + 3 H(+). It participates in tRNA modification; tRNA-queuosine biosynthesis. Functionally, catalyzes the NADPH-dependent reduction of 7-cyano-7-deazaguanine (preQ0) to 7-aminomethyl-7-deazaguanine (preQ1). The protein is NADPH-dependent 7-cyano-7-deazaguanine reductase of Acinetobacter baumannii (strain ACICU).